Consider the following 446-residue polypeptide: 3-phosphoshikimate 1-carboxyvinyltransferase (446 aa).

3 residues coordinate 3-phosphoshikimate: Lys35, Ser36, and Arg40. Residue Lys35 participates in phosphoenolpyruvate binding. 2 residues coordinate phosphoenolpyruvate: Gly108 and Arg137. Positions 182, 184, 332, and 359 each coordinate 3-phosphoshikimate. Gln184 contacts phosphoenolpyruvate. The active-site Proton acceptor is the Asp332. Phosphoenolpyruvate-binding residues include Arg363 and Arg405.

The protein belongs to the EPSP synthase family. As to quaternary structure, monomer.

It localises to the cytoplasm. It carries out the reaction 3-phosphoshikimate + phosphoenolpyruvate = 5-O-(1-carboxyvinyl)-3-phosphoshikimate + phosphate. Its pathway is metabolic intermediate biosynthesis; chorismate biosynthesis; chorismate from D-erythrose 4-phosphate and phosphoenolpyruvate: step 6/7. Catalyzes the transfer of the enolpyruvyl moiety of phosphoenolpyruvate (PEP) to the 5-hydroxyl of shikimate-3-phosphate (S3P) to produce enolpyruvyl shikimate-3-phosphate and inorganic phosphate. This Acaryochloris marina (strain MBIC 11017) protein is 3-phosphoshikimate 1-carboxyvinyltransferase.